A 242-amino-acid chain; its full sequence is TGACG-sequence-specific DNA-binding protein TGA-1B (242 aa).

The segment at 1 to 125 is disordered; that stretch reads EFCDFSGNQA…HSSPNFENNS (125 aa). The segment covering 18 to 45 has biased composition (polar residues); that stretch reads DTSSPELRQSSSGSDVLNATSSTSSHQV. Positions 66 to 79 are enriched in basic and acidic residues; the sequence is EGSRESANDNKGLG. The segment covering 88–125 has biased composition (polar residues); sequence SPESQGSGNYGSNVSEGLNYPSDSNKSVHSSPNFENNS. Residues 183–242 enclose the bZIP domain; that stretch reads DEKKRARLVRNRESAQLSRQRKKHYVEELEDKVRIMHSTIQDLNAKVAYIIAENATLKTQ. The segment at 185–216 is basic motif; the sequence is KKRARLVRNRESAQLSRQRKKHYVEELEDKVR. A leucine-zipper region spans residues 225–239; that stretch reads LNAKVAYIIAENATL.

This sequence belongs to the bZIP family.

It is found in the nucleus. Its function is as follows. Binds specifically to the DNA sequence 5'-TGACG-3'. This chain is TGACG-sequence-specific DNA-binding protein TGA-1B (TGA1B), found in Nicotiana tabacum (Common tobacco).